A 270-amino-acid polypeptide reads, in one-letter code: Thiazole synthase (270 aa).

The active-site Schiff-base intermediate with DXP is Lys112. 1-deoxy-D-xylulose 5-phosphate contacts are provided by residues Gly173, 199-200 (AG), and 221-222 (NS).

Belongs to the ThiG family. As to quaternary structure, homotetramer. Forms heterodimers with either ThiH or ThiS.

It localises to the cytoplasm. It catalyses the reaction [ThiS sulfur-carrier protein]-C-terminal-Gly-aminoethanethioate + 2-iminoacetate + 1-deoxy-D-xylulose 5-phosphate = [ThiS sulfur-carrier protein]-C-terminal Gly-Gly + 2-[(2R,5Z)-2-carboxy-4-methylthiazol-5(2H)-ylidene]ethyl phosphate + 2 H2O + H(+). It functions in the pathway cofactor biosynthesis; thiamine diphosphate biosynthesis. Its function is as follows. Catalyzes the rearrangement of 1-deoxy-D-xylulose 5-phosphate (DXP) to produce the thiazole phosphate moiety of thiamine. Sulfur is provided by the thiocarboxylate moiety of the carrier protein ThiS. In vitro, sulfur can be provided by H(2)S. The chain is Thiazole synthase from Pseudomonas entomophila (strain L48).